The sequence spans 257 residues: MQKVTIQEAEHLLQEIISEEDDRFQILIKDERKGVQKLISKWYKQKELAQKEKEKFLEMSKYENALREKGLTYIAGIDEVGRGPLAGPVVTAAVILPEDFYIPGLNDSKKLSEAKRERFYGEIKAKAIAIGVXIVSPQVIDEINIYQATKQAMLDAIANLSCTPEYLLIDAMKLPTPIPQTSIIKGDAKSISISAASIIAKVTRDRMMKELGEKYPAYGFEQHMGYGTKQHLEAIEAHGVLEEHRKSFAPIKDMIQK.

The 186-residue stretch at 72–257 (TYIAGIDEVG…FAPIKDMIQK (186 aa)) folds into the RNase H type-2 domain. Residues D78, E79, and D170 each coordinate a divalent metal cation.

The protein belongs to the RNase HII family. Mn(2+) is required as a cofactor. Mg(2+) serves as cofactor.

It localises to the cytoplasm. The catalysed reaction is Endonucleolytic cleavage to 5'-phosphomonoester.. Its function is as follows. Endonuclease that specifically degrades the RNA of RNA-DNA hybrids. This Bacillus cereus (strain AH820) protein is Ribonuclease HII.